Consider the following 1059-residue polypeptide: Nonsense-mediated mRNA decay factor SMG7 (1059 aa).

2 TPR repeats span residues 149 to 183 (DQQS…LGDL) and 184 to 217 (ARYK…WPAS). Residues 806–817 (SHVSPAHSQSTS) are compositionally biased toward polar residues. 4 disordered regions span residues 806 to 826 (SHVS…KWSP), 927 to 955 (HLGP…SGNN), 987 to 1015 (SGKP…QVPT), and 1040 to 1059 (STQL…RHFV).

Interacts with EXA1. As to expression, expressed in flowers and at lower levels in stems and leaves.

It localises to the cytoplasm. The protein localises to the P-body. Plays multiple roles in growth and development. Involved in nonsense-mediated mRNA decay (NMD). May provide a link to the mRNA degradation machinery to initiate NMD and serve as an adapter for UPF proteins function. Required for meiotic progression through anaphase II of pollen mother cells. May counteract cyclin-dependent kinase (CDK) activity at the end of meiosis. May play a role in plant defense through its involvement in NMD. Together with EXA1, helps to restrict cell death induction during pathogen infection in a salicylic acid- (SA) and reactive oxygen species- (ROS) independent manner. The protein is Nonsense-mediated mRNA decay factor SMG7 of Arabidopsis thaliana (Mouse-ear cress).